Here is a 137-residue protein sequence, read N- to C-terminus: Large ribosomal subunit protein uL16 (137 aa).

Belongs to the universal ribosomal protein uL16 family. Part of the 50S ribosomal subunit.

Functionally, binds 23S rRNA and is also seen to make contacts with the A and possibly P site tRNAs. The polypeptide is Large ribosomal subunit protein uL16 (Cellvibrio japonicus (strain Ueda107) (Pseudomonas fluorescens subsp. cellulosa)).